A 1525-amino-acid chain; its full sequence is Autophagy-related protein 2 (1525 aa).

Belongs to the ATG2 family.

Its subcellular location is the preautophagosomal structure membrane. It is found in the endoplasmic reticulum membrane. It catalyses the reaction a 1,2-diacyl-sn-glycero-3-phosphocholine(in) = a 1,2-diacyl-sn-glycero-3-phosphocholine(out). The catalysed reaction is a 1,2-diacyl-sn-glycero-3-phospho-L-serine(in) = a 1,2-diacyl-sn-glycero-3-phospho-L-serine(out). The enzyme catalyses a 1,2-diacyl-sn-glycero-3-phosphoethanolamine(in) = a 1,2-diacyl-sn-glycero-3-phosphoethanolamine(out). Lipid transfer protein required for autophagosome completion and peroxisome degradation. Tethers the edge of the isolation membrane (IM) to the endoplasmic reticulum (ER) and mediates direct lipid transfer from ER to IM for IM expansion. ATG2 binds to the ER exit site (ERES), which is the membrane source for autophagosome formation, using basic residues in its N-terminal region (NR) and to the expanding edge of the IM through its C-terminal region. The latter binding is assisted by an ATG18-PtdIns3P interaction. ATG2 then extracts phospholipids from the membrane source using its NR and transfers them to ATG9 to the IM through its predicted beta-sheet-rich structure for membrane expansion. The chain is Autophagy-related protein 2 (ATG2) from Eremothecium gossypii (strain ATCC 10895 / CBS 109.51 / FGSC 9923 / NRRL Y-1056) (Yeast).